A 404-amino-acid chain; its full sequence is Multidrug resistance protein MdtG (404 aa).

Helical transmembrane passes span 19-39 (LGCFLTGAAFSLVMPFLPLYV), 56-76 (LVFSITFLFSAIASPFWGGLA), 90-110 (LGMAIVMLLMGMAQNIWQFLI), 113-133 (ALLGLLGGFIPNANALIATQV), 144-164 (TLSTGGVSGALLGPLAGGLLA), 171-191 (PVFFITASVLFICFLLTFFFI), 222-242 (LFVTTLIIQVATGSIAPILTL), 254-274 (IAFISGMIASVPGVAALLSAP), 288-308 (ILIVALIISVLLLIPMSFVQT), 317-337 (FLLGAADGALLPAVQTLLVYN), and 376-396 (AVFCVTAGVVLFNAIYSWNSL).

It belongs to the major facilitator superfamily. DHA1 family. MdtG (TC 2.A.1.2.20) subfamily.

The protein resides in the cell inner membrane. This chain is Multidrug resistance protein MdtG, found in Salmonella schwarzengrund (strain CVM19633).